The chain runs to 59 residues: Large ribosomal subunit protein bL32 (59 aa).

Residues 1–25 are disordered; that stretch reads MAVQQNKKSPSKRGMHRAHDFLTAP.

Belongs to the bacterial ribosomal protein bL32 family.

This chain is Large ribosomal subunit protein bL32, found in Azoarcus sp. (strain BH72).